Here is a 933-residue protein sequence, read N- to C-terminus: Neuronal PAS domain-containing protein 4A (933 aa).

Residues 1-13 (MYRSTKGASKARR) are basic motif; degenerate. Positions 1–53 (MYRSTKGASKARRDQINAEIRNLKDLLPISDADKSRLSYLHIMSLACMYTRKS) constitute a bHLH domain. Residues 14-53 (DQINAEIRNLKDLLPISDADKSRLSYLHIMSLACMYTRKS) form a helix-loop-helix motif region. PAS domains are found at residues 74-148 (SFYE…PDTD) and 220-290 (TSAS…LREG). One can recognise a PAC domain in the interval 295 to 334 (AEMVVRVETADHSWVWLYMVLQLETGETPIVSNNYIISET). Residues 361 to 398 (QESVSLQSPETLSSPDQVFTPGSSGLSGQSFDFSTAAC) are compositionally biased toward polar residues. Disordered stretches follow at residues 361-451 (QESV…ASSP), 514-573 (GSNF…LSSL), and 750-776 (DLSSSPPLSPTPSSSSHSSPPSSPSTP). Composition is skewed to low complexity over residues 399 to 411 (STGSTEEQGGSSS), 440 to 451 (EPMASPSSASSP), 538 to 560 (GQTATVTTTTAPSLSPSAPSNPQ), and 751 to 769 (LSSSPPLSPTPSSSSHSSP).

As to quaternary structure, efficient DNA binding requires dimerization with another bHLH protein. Brain-specific.

It localises to the nucleus. Functionally, transcription factor expressed in neurons of the brain that regulates the excitatory-inhibitory balance within neural circuits and is required for contextual memory in the hippocampus. Plays a key role in the structural and functional plasticity of neurons. Acts as an early-response transcription factor in both excitatory and inhibitory neurons, where it induces distinct but overlapping sets of late-response genes in these two types of neurons, allowing the synapses that form on inhibitory and excitatory neurons to be modified by neuronal activity in a manner specific to their function within a circuit, thereby facilitating appropriate circuit responses to sensory experience. The polypeptide is Neuronal PAS domain-containing protein 4A (npas4a) (Danio rerio (Zebrafish)).